The chain runs to 780 residues: MMRCLTITIMFFMFFFLSVIQKCKSETSKSGDYIIYMGAASSDGSTDNDHVELLSSLLQRSGKTPMHRYKHGFSGFAAHLSEDEAHLIAKQPGVLSVFPDQMLQLHTTRSWDFLVQESYQRDTYFTEMNYEQESEMHEGDTIIGFLDSGIWPEAQSFNDRHMGPVPEKWKGTCMRGKKTQPDSFRCNRKLIGARYYNSSFFLDPDYETPRDFLGHGTHVASIAAGQIIANASYYGLASGIMRGGSPSSRIAMYRACSLLGCRGSSILAAFDDAIADGVDVISISMGLWPDNLLEDPLSIGSFHAVERGITVVCSVGNSGPSSQSVFNAAPWMITVAASTIDRGFESNILLGGDENRLIEGFGINIANIDKTQAYPLIHARSAKKIDANEEAARNCAPDTLDQTIVKGKIVVCDSDLDNQVIQWKSDEVKRLGGIGMVLVDDESMDLSFIDPSFLVTIIKPEDGIQIMSYINSTREPIATIMPTRSRTGHMLAPSIPSFSSRGPYLLTRSILKPDIAAPGVNILASWLVGDRNAAPEGKPPPLFNIESGTSMSCPHVSGIAARLKSRYPSWSPAAIRSAIMTTAVQMTNTGSHITTETGEKATPYDFGAGQVTIFGPSSPGLIYETNHMDYLNFLGYYGFTSDQIKKISNRIPQGFACPEQSNRGDISNINYPSISISNFNGKESRRVSRTVTNVASRLIGDEDTVYTVSIDAPEGLLVRVIPRRLHFRKIGDKLSYQVIFSSTTTILKDDAFGSITWSNGMYNVRSPFVVTSKDDNDSER.

A signal peptide spans 1-25 (MMRCLTITIMFFMFFFLSVIQKCKS). A propeptide spans 26–106 (ETSKSGDYII…VFPDQMLQLH (81 aa)) (activation peptide). Residues 33–106 (YIIYMGAASS…VFPDQMLQLH (74 aa)) enclose the Inhibitor I9 domain. Residues 110–617 (SWDFLVQESY…AGQVTIFGPS (508 aa)) enclose the Peptidase S8 domain. Catalysis depends on D147, which acts as the Charge relay system. N197 carries an N-linked (GlcNAc...) asparagine glycan. H215 functions as the Charge relay system in the catalytic mechanism. A glycan (N-linked (GlcNAc...) asparagine) is linked at N230. In terms of domain architecture, PA spans 385–469 (IDANEEAARN…PEDGIQIMSY (85 aa)). N471 carries N-linked (GlcNAc...) asparagine glycosylation. S550 serves as the catalytic Charge relay system. Residue N776 is glycosylated (N-linked (GlcNAc...) asparagine).

The protein belongs to the peptidase S8 family.

It localises to the secreted. The polypeptide is Subtilisin-like protease SBT5.1 (Arabidopsis thaliana (Mouse-ear cress)).